The primary structure comprises 587 residues: FAD-dependent monooxygenase ankC (587 aa).

The helical transmembrane segment at 7–27 threads the bilayer; the sequence is AVDVLIIGAGPAGLIAAMWMA. FAD-binding residues include Tyr245 and Asp311.

The protein belongs to the PheA/TfdB FAD monooxygenase family. Homodimer. FAD is required as a cofactor.

It localises to the membrane. The catalysed reaction is cyclo(L-arginyl-L-dehydrotyrosyl) + AH2 + O2 = cyclo(L-arginyl-(Z)-dehydro-3,4-dihydroxytyrosyl) + A + H2O. The protein operates within secondary metabolite biosynthesis. In terms of biological role, FAD-dependent monooxygenase; part of the ank cluster that mediates the biosynthesis of NK13650 C, a highly modified cyclo-arginine-tyrosine dipeptide. AnkC uses as substrate the dehydro-cyclodipeptide intermediate generated by the monooxygase ankB and acts as a hydroxylase that installs the m-OH through a canonical flavin-dependent aromatic hydroxylation mechanism. Within the pathway, the cyclodipeptide synthase ankA acts as the scaffold-generating enzyme and is responsible for formation of the cyclo-Arg-Tyr diketopiperazine (cRY) from L-Arg and L-Tyr. The ankA product cRY is desaturated by the cytochrome P450 monooxygenase ankB to yield a dehydro-cyclodipeptide intermediate. The FAD-dependent monooxygenase ankC then installs the m-OH, ankD catalyzes the attachment of L-homoserine, and ankE ligates citrate to the ankD product to yield NK13650 B. The O-methyltransferase ankF is responsible for methylation of the C-17 phenol group of NK13650 B to produce NK13650 D. Amidation of NK13650 D with L-Asp by ankG then leads to the production of NK13650 C, whereas amidation of NK13650 B produces NK13650 A. The sequence is that of FAD-dependent monooxygenase ankC from Aspergillus thermomutatus (Neosartorya pseudofischeri).